Reading from the N-terminus, the 884-residue chain is Protein translocase subunit SecA (884 aa).

Residues glutamine 82, 100 to 104, and aspartate 491 contribute to the ATP site; that span reads GEGKT.

The protein belongs to the SecA family.

The protein localises to the plastid. Its subcellular location is the chloroplast stroma. It is found in the chloroplast thylakoid membrane. The catalysed reaction is ATP + H2O + cellular proteinSide 1 = ADP + phosphate + cellular proteinSide 2.. In terms of biological role, has a central role in coupling the hydrolysis of ATP to the transfer of proteins across the thylakoid membrane. This Olisthodiscus luteus (Marine phytoflagellate) protein is Protein translocase subunit SecA.